The primary structure comprises 138 residues: ATP synthase epsilon chain (138 aa).

This sequence belongs to the ATPase epsilon chain family. In terms of assembly, F-type ATPases have 2 components, CF(1) - the catalytic core - and CF(0) - the membrane proton channel. CF(1) has five subunits: alpha(3), beta(3), gamma(1), delta(1), epsilon(1). CF(0) has three main subunits: a, b and c.

It localises to the cell inner membrane. Functionally, produces ATP from ADP in the presence of a proton gradient across the membrane. This chain is ATP synthase epsilon chain, found in Geobacter sulfurreducens (strain ATCC 51573 / DSM 12127 / PCA).